Consider the following 110-residue polypeptide: Tumor suppressor candidate 2 (110 aa).

G2 is lipidated: N-myristoyl glycine. S50 bears the Phosphoserine mark.

The protein belongs to the TUSC2 family. Post-translationally, myristoylation is required for tumor suppressor activity. Strong expression in heart, lung, skeletal muscle, kidney, and pancreas, followed by brain and liver, lowest levels in placenta.

Functionally, may function as a tumor suppressor, inhibiting colony formation, causing G1 arrest and ultimately inducing apoptosis in homozygous 3p21.3 120-kb region-deficient cells. This is Tumor suppressor candidate 2 (TUSC2) from Homo sapiens (Human).